Reading from the N-terminus, the 311-residue chain is uncharacterized protein (311 aa).

The N-terminal stretch at 1–13 (MLLSLIFPIAVLG) is a signal peptide. Residue asparagine 115 is glycosylated (N-linked (GlcNAc...) asparagine).

Its subcellular location is the secreted. This is an uncharacterized protein from Encephalitozoon cuniculi (strain GB-M1) (Microsporidian parasite).